Consider the following 964-residue polypeptide: Activator of stress genes 1 (964 aa).

The segment at residues 21-47 is a DNA-binding region (zn(2)-C6 fungal-type); it reads CDECRKKKVKCDGQQPCIHCTVYSYEC. A disordered region spans residues 104-125; sequence ASTIPASNNPSKPRKYKTKSTR. S166 carries the post-translational modification Phosphoserine; by ATM or ATR. The residue at position 186 (S186) is a Phosphoserine. Composition is skewed to polar residues over residues 190-201, 209-225, and 733-759; these read PVLSSNSKNSTP, KSDSNSASSNREQDSVD, and NNTPISENPLNEAQQQDQVSQGTTNMS. Disordered stretches follow at residues 190–225, 733–764, and 800–900; these read PVLSSNSKNSTPDEFLPNMKSDSNSASSNREQDSVD, NNTPISENPLNEAQQQDQVSQGTTNMSNERDP, and NSAF…SPSY. Residues 800–896 are compositionally biased toward low complexity; it reads NSAFDFSSSK…NDFGIKIDNN (97 aa). At S963 the chain carries Phosphoserine.

Belongs to the ASG1 family.

The protein localises to the nucleus. In terms of biological role, probable transcription factor involved in the stress response. This Saccharomyces cerevisiae (strain ATCC 204508 / S288c) (Baker's yeast) protein is Activator of stress genes 1 (ASG1).